Here is a 214-residue protein sequence, read N- to C-terminus: MLITFEGIDGAGKSTQIQKLAAYLKQEGREVLTLREPGGTEVAEKIRHILLESRHDITPVGELLLFSASRAELVSEVVRPALAEGKTVILDRFFDSTTAYQGYGRGLDLNMLRTLIAISTGALTPDITFYLDILPEEALIRKFSEKSLPLAFENEELDRMERSGLEFYRNVRQGYLDIIEAEPGRFKSINARHGVQEIHAIIVKTLNERFKEQS.

Position 7 to 14 (7 to 14) interacts with ATP; sequence GIDGAGKS.

This sequence belongs to the thymidylate kinase family.

It catalyses the reaction dTMP + ATP = dTDP + ADP. In terms of biological role, phosphorylation of dTMP to form dTDP in both de novo and salvage pathways of dTTP synthesis. This chain is Thymidylate kinase, found in Chlorobium luteolum (strain DSM 273 / BCRC 81028 / 2530) (Pelodictyon luteolum).